Consider the following 128-residue polypeptide: Fluoride-specific ion channel FluC (128 aa).

4 helical membrane passes run 5–25 (IVAI…LGLA), 35–55 (LGTL…AVVF), 67–87 (LFVI…SVEV), and 96–116 (FGWA…LTAL). Na(+) contacts are provided by Gly75 and Thr78.

Belongs to the fluoride channel Fluc/FEX (TC 1.A.43) family.

The protein resides in the cell inner membrane. It carries out the reaction fluoride(in) = fluoride(out). With respect to regulation, na(+) is not transported, but it plays an essential structural role and its presence is essential for fluoride channel function. Its function is as follows. Fluoride-specific ion channel. Important for reducing fluoride concentration in the cell, thus reducing its toxicity. The chain is Fluoride-specific ion channel FluC from Burkholderia vietnamiensis (strain G4 / LMG 22486) (Burkholderia cepacia (strain R1808)).